The sequence spans 717 residues: Fatty acid oxidation complex subunit alpha (717 aa).

The tract at residues 1-189 (MIYQSPTIEV…KVGAIDAVVA (189 aa)) is enoyl-CoA hydratase/isomerase. A substrate-binding site is contributed by aspartate 296. Positions 311–717 (KKVNSAAVLG…ANNGSYYQQA (407 aa)) are 3-hydroxyacyl-CoA dehydrogenase. NAD(+) is bound by residues methionine 324, aspartate 343, 400-402 (VVE), lysine 407, and serine 429. Histidine 450 serves as the catalytic For 3-hydroxyacyl-CoA dehydrogenase activity. Residue asparagine 453 participates in NAD(+) binding. Positions 500 and 660 each coordinate substrate.

The protein in the N-terminal section; belongs to the enoyl-CoA hydratase/isomerase family. This sequence in the C-terminal section; belongs to the 3-hydroxyacyl-CoA dehydrogenase family. As to quaternary structure, heterotetramer of two alpha chains (FadB) and two beta chains (FadA).

The catalysed reaction is a (3S)-3-hydroxyacyl-CoA + NAD(+) = a 3-oxoacyl-CoA + NADH + H(+). It catalyses the reaction a (3S)-3-hydroxyacyl-CoA = a (2E)-enoyl-CoA + H2O. The enzyme catalyses a 4-saturated-(3S)-3-hydroxyacyl-CoA = a (3E)-enoyl-CoA + H2O. It carries out the reaction (3S)-3-hydroxybutanoyl-CoA = (3R)-3-hydroxybutanoyl-CoA. The catalysed reaction is a (3Z)-enoyl-CoA = a 4-saturated (2E)-enoyl-CoA. It catalyses the reaction a (3E)-enoyl-CoA = a 4-saturated (2E)-enoyl-CoA. Its pathway is lipid metabolism; fatty acid beta-oxidation. Functionally, involved in the aerobic and anaerobic degradation of long-chain fatty acids via beta-oxidation cycle. Catalyzes the formation of 3-oxoacyl-CoA from enoyl-CoA via L-3-hydroxyacyl-CoA. It can also use D-3-hydroxyacyl-CoA and cis-3-enoyl-CoA as substrate. This is Fatty acid oxidation complex subunit alpha from Shewanella pealeana (strain ATCC 700345 / ANG-SQ1).